The sequence spans 285 residues: TATA box-binding protein-associated factor RNA polymerase I subunit D (285 aa).

Disordered regions lie at residues 1 to 49 (MAQS…RIPT) and 85 to 112 (KKKRKKRKKRKYKPKLRRQGRPSGTRNI). The span at 21-39 (GNQSDDSSNSSLFKTQCVP) shows a compositional bias: polar residues. Ser-24 is modified (phosphoserine). The span at 85-104 (KKKRKKRKKRKYKPKLRRQG) shows a compositional bias: basic residues. Phosphoserine is present on Ser-134. The tract at residues 193–219 (HKYMDDDGPLSPIEEPSTEDEATDPQS) is disordered. At Ser-229 the chain carries Phosphoserine. 2 stretches are compositionally biased toward basic and acidic residues: residues 242-264 (NLEQGKIKKESAFSKKSKAKDAT) and 273-285 (KGGEHACLHSEVS). Positions 242–285 (NLEQGKIKKESAFSKKSKAKDATQRGNRRSWKGGEHACLHSEVS) are disordered.

As to quaternary structure, component of the transcription factor SL1/TIF-IB complex, composed of TBP and at least TAF1A, TAF1B, TAF1C and TAF1D. Interacts with UBTF.

It is found in the nucleus. Functionally, component of the transcription factor SL1/TIF-IB complex, which is involved in the assembly of the PIC (preinitiation complex) during RNA polymerase I-dependent transcription. The rate of PIC formation probably is primarily dependent on the rate of association of SL1/TIF-IB with the rDNA promoter. SL1/TIF-IB is involved in stabilization of nucleolar transcription factor 1/UBTF on rDNA. Formation of SL1/TIF-IB excludes the association of TBP with TFIID subunits. In Rattus norvegicus (Rat), this protein is TATA box-binding protein-associated factor RNA polymerase I subunit D (Taf1d).